The sequence spans 267 residues: Ribosomal RNA small subunit methyltransferase A (267 aa).

Positions 18, 20, 45, 66, 91, and 112 each coordinate S-adenosyl-L-methionine.

Belongs to the class I-like SAM-binding methyltransferase superfamily. rRNA adenine N(6)-methyltransferase family. RsmA subfamily.

It localises to the cytoplasm. The enzyme catalyses adenosine(1518)/adenosine(1519) in 16S rRNA + 4 S-adenosyl-L-methionine = N(6)-dimethyladenosine(1518)/N(6)-dimethyladenosine(1519) in 16S rRNA + 4 S-adenosyl-L-homocysteine + 4 H(+). In terms of biological role, specifically dimethylates two adjacent adenosines (A1518 and A1519) in the loop of a conserved hairpin near the 3'-end of 16S rRNA in the 30S particle. May play a critical role in biogenesis of 30S subunits. In Shewanella sediminis (strain HAW-EB3), this protein is Ribosomal RNA small subunit methyltransferase A.